Reading from the N-terminus, the 316-residue chain is tRNA dimethylallyltransferase (316 aa).

17 to 24 (GPTASGKT) is a binding site for ATP. A substrate-binding site is contributed by 19–24 (TASGKT). Interaction with substrate tRNA stretches follow at residues 42 to 45 (DSAL), 166 to 170 (QRLSR), and 247 to 252 (RCVGYR).

This sequence belongs to the IPP transferase family. As to quaternary structure, monomer. The cofactor is Mg(2+).

The enzyme catalyses adenosine(37) in tRNA + dimethylallyl diphosphate = N(6)-dimethylallyladenosine(37) in tRNA + diphosphate. In terms of biological role, catalyzes the transfer of a dimethylallyl group onto the adenine at position 37 in tRNAs that read codons beginning with uridine, leading to the formation of N6-(dimethylallyl)adenosine (i(6)A). This Erwinia tasmaniensis (strain DSM 17950 / CFBP 7177 / CIP 109463 / NCPPB 4357 / Et1/99) protein is tRNA dimethylallyltransferase.